The following is a 372-amino-acid chain: tRNA-specific 2-thiouridylase MnmA (372 aa).

ATP-binding positions include 7-14 and Met33; that span reads GLSGGVDS. Positions 104 to 106 are interaction with target base in tRNA; that stretch reads NPD. The active-site Nucleophile is the Cys109. Cys109 and Cys202 are disulfide-bonded. Residue Gly134 coordinates ATP. The tract at residues 152–154 is interaction with tRNA; sequence KDQ. Cys202 acts as the Cysteine persulfide intermediate in catalysis. Residues 310 to 311 are interaction with tRNA; it reads RY.

It belongs to the MnmA/TRMU family.

It localises to the cytoplasm. It carries out the reaction S-sulfanyl-L-cysteinyl-[protein] + uridine(34) in tRNA + AH2 + ATP = 2-thiouridine(34) in tRNA + L-cysteinyl-[protein] + A + AMP + diphosphate + H(+). Functionally, catalyzes the 2-thiolation of uridine at the wobble position (U34) of tRNA, leading to the formation of s(2)U34. The sequence is that of tRNA-specific 2-thiouridylase MnmA from Mesomycoplasma hyopneumoniae (strain 7448) (Mycoplasma hyopneumoniae).